The sequence spans 961 residues: Gamma-tubulin small complex component GCP2 (961 aa).

Residues 15–76 (NLHRSPKLAT…KPSIPPLKSE (62 aa)) form a disordered region. The span at 43 to 54 (LGSNVVSHPTRS) shows a compositional bias: polar residues. Basic and acidic residues predominate over residues 55-65 (SPEKTTDKPAD).

The protein belongs to the TUBGCP family. As to quaternary structure, component of the gamma-tubulin small complex (gamma-TuSC) composed of tubulin gamma chain, gamma-tubulin complex protein 2 (GCP2) and gamma-tubulin complex protein 3 (GCP3). Interacts with tubulin gamma chain.

The protein localises to the cytoplasm. Its subcellular location is the cytoskeleton. The protein resides in the flagellum axoneme. It is found in the flagellum basal body. Functionally, component of the gamma-tubulin small complex (gamma-TuSC) involved in microtubule (MT) nucleation for the formation of median bodies and in the biogenesis of flagella. Gamma-TuSC may be required for the correct positioning of EB1 within the trophozoites. The sequence is that of Gamma-tubulin small complex component GCP2 from Giardia intestinalis (strain ATCC 50803 / WB clone C6) (Giardia lamblia).